A 415-amino-acid chain; its full sequence is Phosphoglycerate kinase (415 aa).

Residues 27–29 (DIN), Arg-44, 67–70 (HQGR), Arg-124, and Arg-164 each bind substrate. ATP is bound by residues Glu-336 and 362–365 (GGHM).

It belongs to the phosphoglycerate kinase family. As to quaternary structure, monomer.

Its subcellular location is the cytoplasm. It carries out the reaction (2R)-3-phosphoglycerate + ATP = (2R)-3-phospho-glyceroyl phosphate + ADP. It participates in carbohydrate degradation; glycolysis; pyruvate from D-glyceraldehyde 3-phosphate: step 2/5. This Sulfurisphaera tokodaii (strain DSM 16993 / JCM 10545 / NBRC 100140 / 7) (Sulfolobus tokodaii) protein is Phosphoglycerate kinase.